Consider the following 438-residue polypeptide: Enolase (438 aa).

Substrate-binding residues include histidine 159 and glutamate 168. Catalysis depends on glutamate 211, which acts as the Proton donor. Positions 246, 297, and 322 each coordinate Mg(2+). Glutamate 297 and aspartate 322 together coordinate substrate. Lysine 347 (proton acceptor) is an active-site residue. Residues 374 to 377 and lysine 398 contribute to the substrate site; that span reads SHRS.

This sequence belongs to the enolase family. In terms of assembly, homodimer. Mg(2+) serves as cofactor.

It is found in the cytoplasm. The enzyme catalyses (2R)-2-phosphoglycerate = phosphoenolpyruvate + H2O. Its pathway is carbohydrate degradation; glycolysis; pyruvate from D-glyceraldehyde 3-phosphate: step 4/5. Involved in osmoadaptation. The chain is Enolase (enoA) from Emericella nidulans (strain FGSC A4 / ATCC 38163 / CBS 112.46 / NRRL 194 / M139) (Aspergillus nidulans).